A 159-amino-acid polypeptide reads, in one-letter code: UPF0260 protein Avi_1324 (159 aa).

It belongs to the UPF0260 family.

The sequence is that of UPF0260 protein Avi_1324 from Allorhizobium ampelinum (strain ATCC BAA-846 / DSM 112012 / S4) (Agrobacterium vitis (strain S4)).